We begin with the raw amino-acid sequence, 219 residues long: Response regulator ArlR (219 aa).

Residues 3–116 form the Response regulatory domain; sequence NILIVEDEQN…ELLARIRAVL (114 aa). Aspartate 52 is subject to 4-aspartylphosphate. Positions 122–219 form a DNA-binding region, ompR/PhoB-type; sequence KDVLDINGII…TVRGVGYVIR (98 aa).

Post-translationally, phosphorylated by ArlS.

Its subcellular location is the cytoplasm. Member of the two-component regulatory system ArlS/ArlR. This is Response regulator ArlR (arlR) from Staphylococcus epidermidis (strain ATCC 35984 / DSM 28319 / BCRC 17069 / CCUG 31568 / BM 3577 / RP62A).